Here is a 140-residue protein sequence, read N- to C-terminus: Midkine (140 aa).

An N-terminal signal peptide occupies residues 1–20; sequence MQHRSFFLLALVALLAVTTA. 5 disulfides stabilise this stretch: cysteine 34–cysteine 58, cysteine 42–cysteine 67, cysteine 49–cysteine 71, cysteine 81–cysteine 113, and cysteine 91–cysteine 123.

This sequence belongs to the pleiotrophin family. In terms of assembly, homodimer. Interacts with ALK. Interacts with LRP1; promotes neuronal survival. Interacts with LRP2. Interacts with NCAM1. Interacts (via C-terminal) with PTPRZ1 (via chondroitin sulfate chains); this interaction is inhibited by PTN; this interaction promotes neuronal migration. Interacts with NCL; this interaction promotes NCL clustering and lateral movements of this complex into lipid rafts leading to MDK internalization. Interacts with LRP6 and LRP8: this interaction is calcium dependent. Interacts with ITGA4. Interacts with ITGA6. Interacts with ITGB1. Interacts with ITGA4:ITGB1 complex; this interaction mediates MDK-induced osteoblast cells migration through PXN phosphorylation. Interacts with ITGA6:ITGB1 complex; this interaction mediates MDK-induced neurite outgrowth. Interacts with NOTCH2; this interactio mediates a nuclear accumulation of NOTCH2 and therefore activation of NOTCH2 signaling leading to interaction between HES1 and STAT3. Interacts with GPC2 (via heparan sulfate chain); this interaction is inhibited by heparin followed by chondroitin sulfate E; this interaction induces GPC2 clustering through heparan sulfate chain; this interaction induces neuronal cell adhesion and neurite outgrowth. Interacts with SDC3; this interaction induces SDC3 clustering; this interaction induces neuronal cell adhesion and neurite outgrowth. Interacts with SDC1. Interacts with CSPG5; this interaction promotes elongation of oligodendroglial precursor-like cells. Expressed at a low level in arteries, and at higher levels in newly formed neointima. In brain, expressed in the caudate nucleus and the brain stem.

It localises to the secreted. Developmentally regulated, secreted growth factor homologous to pleiotrophin (PTN), which has heparin binding activity. Binds anaplastic lymphoma kinase (ALK) which induces ALK activation and subsequent phosphorylation of the insulin receptor substrate (IRS1), followed by the activation of mitogen-activated protein kinase (MAPK) and PI3-kinase, and the induction of cell proliferation. Involved in neointima formation after arterial injury, possibly by mediating leukocyte recruitment. Also involved in early fetal adrenal gland development. In terms of biological role, secreted protein that functions as a cytokine and growth factor and mediates its signal through cell-surface proteoglycan and non-proteoglycan receptors. Binds cell-surface proteoglycan receptors via their chondroitin sulfate (CS) groups. Thereby regulates many processes like inflammatory response, cell proliferation, cell adhesion, cell growth, cell survival, tissue regeneration, cell differentiation and cell migration. Participates in inflammatory processes by exerting two different activities. Firstly, mediates neutrophils and macrophages recruitment to the sites of inflammation both by direct action by cooperating namely with ITGB2 via LRP1 and by inducing chemokine expression. This inflammation can be accompanied by epithelial cell survival and smooth muscle cell migration after renal and vessel damage, respectively. Secondly, suppresses the development of tolerogenic dendric cells thereby inhibiting the differentiation of regulatory T cells and also promote T cell expansion through NFAT signaling and Th1 cell differentiation. Promotes tissue regeneration after injury or trauma. After heart damage negatively regulates the recruitment of inflammatory cells and mediates cell survival through activation of anti-apoptotic signaling pathways via MAPKs and AKT pathways through the activation of angiogenesis. Also facilitates liver regeneration as well as bone repair by recruiting macrophage at trauma site and by promoting cartilage development by facilitating chondrocyte differentiation. Plays a role in brain by promoting neural precursor cells survival and growth through interaction with heparan sulfate proteoglycans. Binds PTPRZ1 and promotes neuronal migration and embryonic neurons survival. Binds SDC3 or GPC2 and mediates neurite outgrowth and cell adhesion. Binds chondroitin sulfate E and heparin leading to inhibition of neuronal cell adhesion induced by binding with GPC2. Binds CSPG5 and promotes elongation of oligodendroglial precursor-like cells. Also binds ITGA6:ITGB1 complex; this interaction mediates MDK-induced neurite outgrowth. Binds LRP1; promotes neuronal survival. Binds ITGA4:ITGB1 complex; this interaction mediates MDK-induced osteoblast cells migration through PXN phosphorylation. Binds anaplastic lymphoma kinase (ALK) which induces ALK activation and subsequent phosphorylation of the insulin receptor substrate (IRS1), followed by the activation of mitogen-activated protein kinase (MAPK) and PI3-kinase, and the induction of cell proliferation. Promotes epithelial to mesenchymal transition through interaction with NOTCH2. During arteriogenesis, plays a role in vascular endothelial cell proliferation by inducing VEGFA expression and release which in turn induces nitric oxide synthase expression. Moreover activates vasodilation through nitric oxide synthase activation. Negatively regulates bone formation in response to mechanical load by inhibiting Wnt/beta-catenin signaling in osteoblasts. In addition plays a role in hippocampal development, working memory, auditory response, early fetal adrenal gland development and the female reproductive system. This is Midkine from Rattus norvegicus (Rat).